The sequence spans 93 residues: Putative septation protein SpoVG (93 aa).

It belongs to the SpoVG family.

Its function is as follows. Could be involved in septation. The sequence is that of Putative septation protein SpoVG from Treponema denticola (strain ATCC 35405 / DSM 14222 / CIP 103919 / JCM 8153 / KCTC 15104).